The chain runs to 155 residues: Aspartate carbamoyltransferase regulatory chain (155 aa).

Residues Cys113, Cys118, Cys139, and Cys142 each contribute to the Zn(2+) site.

Belongs to the PyrI family. As to quaternary structure, contains catalytic and regulatory chains. It depends on Zn(2+) as a cofactor.

In terms of biological role, involved in allosteric regulation of aspartate carbamoyltransferase. The protein is Aspartate carbamoyltransferase regulatory chain of Methanospirillum hungatei JF-1 (strain ATCC 27890 / DSM 864 / NBRC 100397 / JF-1).